Consider the following 337-residue polypeptide: Ketol-acid reductoisomerase (NADP(+)) (337 aa).

The KARI N-terminal Rossmann domain occupies 3 to 183 (LEMFYDDDAD…GGTRAGVIKT (181 aa)). NADP(+)-binding positions include 26–29 (YGSQ), K49, S52, S54, and 84–87 (DTAQ). H109 is a catalytic residue. G135 contacts NADP(+). The region spanning 184–329 (TFKDETETDL…KKLRDLMSWV (146 aa)) is the KARI C-terminal knotted domain. D192, E196, E228, and E232 together coordinate Mg(2+). Substrate is bound at residue S253.

It belongs to the ketol-acid reductoisomerase family. It depends on Mg(2+) as a cofactor.

The catalysed reaction is (2R)-2,3-dihydroxy-3-methylbutanoate + NADP(+) = (2S)-2-acetolactate + NADPH + H(+). It catalyses the reaction (2R,3R)-2,3-dihydroxy-3-methylpentanoate + NADP(+) = (S)-2-ethyl-2-hydroxy-3-oxobutanoate + NADPH + H(+). Its pathway is amino-acid biosynthesis; L-isoleucine biosynthesis; L-isoleucine from 2-oxobutanoate: step 2/4. The protein operates within amino-acid biosynthesis; L-valine biosynthesis; L-valine from pyruvate: step 2/4. In terms of biological role, involved in the biosynthesis of branched-chain amino acids (BCAA). Catalyzes an alkyl-migration followed by a ketol-acid reduction of (S)-2-acetolactate (S2AL) to yield (R)-2,3-dihydroxy-isovalerate. In the isomerase reaction, S2AL is rearranged via a Mg-dependent methyl migration to produce 3-hydroxy-3-methyl-2-ketobutyrate (HMKB). In the reductase reaction, this 2-ketoacid undergoes a metal-dependent reduction by NADPH to yield (R)-2,3-dihydroxy-isovalerate. The polypeptide is Ketol-acid reductoisomerase (NADP(+)) (Mycobacterium bovis (strain BCG / Pasteur 1173P2)).